Consider the following 242-residue polypeptide: DNA repair protein RecO (242 aa).

It belongs to the RecO family. Monomer.

Its function is as follows. Involved in DNA repair and RecF pathway recombination. The chain is DNA repair protein RecO from Salmonella enteritidis PT4 (strain P125109).